The chain runs to 158 residues: Adenosine 5'-monophosphoramidase HNT1 (158 aa).

Residues 26 to 129 (IFCKIIKSEI…IPKRDEKSGL (104 aa)) form the HIT domain. AMP contacts are provided by residues 51-52 (DI), Asn103, 109-111 (HQE), and 116-118 (HFH). Residues 114–118 (HVHFH) carry the Histidine triad motif motif. Catalysis depends on His116, which acts as the Tele-AMP-histidine intermediate.

The protein belongs to the HINT family. Homodimer. Interacts with KIN28. The cofactor is Mg(2+).

It catalyses the reaction adenosine 5'-phosphoramidate + H2O = AMP + NH4(+). In terms of biological role, hydrolyzes adenosine 5'-monophosphoramidate substrates such as AMP-morpholidate, AMP-N-alanine methyl ester, AMP-alpha-acetyl lysine methyl ester and AMP-NH2. Plays a role in the regulation of kinase KIN28 function. Essential for growth on galactose media at elevated temperatures. The chain is Adenosine 5'-monophosphoramidase HNT1 from Saccharomyces cerevisiae (strain ATCC 204508 / S288c) (Baker's yeast).